The chain runs to 882 residues: Valine--tRNA ligase (882 aa).

Residues 45–55 (PNVTGSLHIGH) carry the 'HIGH' region motif. Positions 525-529 (KFSKS) match the 'KMSKS' region motif. K528 provides a ligand contact to ATP. Residues 812–881 (EGLIDVAKEK…VLKKGIQNLA (70 aa)) are a coiled coil.

Belongs to the class-I aminoacyl-tRNA synthetase family. ValS type 1 subfamily. Monomer.

It localises to the cytoplasm. The enzyme catalyses tRNA(Val) + L-valine + ATP = L-valyl-tRNA(Val) + AMP + diphosphate. Catalyzes the attachment of valine to tRNA(Val). As ValRS can inadvertently accommodate and process structurally similar amino acids such as threonine, to avoid such errors, it has a 'posttransfer' editing activity that hydrolyzes mischarged Thr-tRNA(Val) in a tRNA-dependent manner. The polypeptide is Valine--tRNA ligase (Leptospira interrogans serogroup Icterohaemorrhagiae serovar copenhageni (strain Fiocruz L1-130)).